The primary structure comprises 138 residues: Drosulfakinins (138 aa).

A signal peptide spans 1–33 (MGLRSCTHFATLVMPLWALAFCFLVLVPVPAQT). Positions 34–73 (TSLQISKGDRRLQDLESNMGAESDQPNANLVGTSLSRFGD) are excised as a propeptide. The residue at position 82 (F82) is a Phenylalanine amide. The propeptide occupies 86 to 108 (VPRPIIPIELDLLMDNDDENTKA). Y114 bears the Sulfotyrosine mark. F119 is subject to Phenylalanine amide. The residue at position 131 (Y131) is a Sulfotyrosine. F136 carries the phenylalanine amide modification.

This sequence belongs to the gastrin/cholecystokinin family.

It localises to the secreted. Its function is as follows. Drosulfakinin-0 (DSK 0) plays diverse biological roles including regulating gut muscle contraction in adults but not in larvae. The protein is Drosulfakinins of Drosophila teissieri (Fruit fly).